The chain runs to 832 residues: Tuftelin-interacting protein 11 (832 aa).

Disordered stretches follow at residues 1 to 21 (MSMS…GVEI) and 33 to 145 (NEFN…GNWE). Composition is skewed to basic and acidic residues over residues 36-49 (NPDR…KEEA) and 88-99 (TAAEEKAEREGS). Positions 121–130 (TGGSFKTSQR) are enriched in polar residues. A G-patch domain is found at 148–194 (TRGIGQKLLQKMGYVPGKGLGKNAQGIVNPIEAKLRKGKGAVGAYGS). Serine 209 bears the Phosphoserine mark.

It belongs to the TFP11/STIP family. As to quaternary structure, identified in the spliceosome C complex.

It localises to the nucleus. Its function is as follows. Involved in pre-mRNA splicing, specifically in spliceosome disassembly during late-stage splicing events. The protein is Tuftelin-interacting protein 11 (tfip11) of Danio rerio (Zebrafish).